The primary structure comprises 122 residues: HLLQFRKMIKKMTGKEPIVSYAFYGCYCGKGGRGKPKDATDRCCFVHDCCYEKVTGCDPKWSYYTYSLENGDIVCEGDPYCTKVKCECDKKAAICFRDNLKTYKNRYMTFPDIFCTDPTEGC.

Intrachain disulfides connect cysteine 26–cysteine 115, cysteine 28–cysteine 44, cysteine 43–cysteine 95, cysteine 49–cysteine 122, cysteine 50–cysteine 88, cysteine 57–cysteine 81, and cysteine 75–cysteine 86. Residues tyrosine 27, glycine 29, and glycine 31 each coordinate Ca(2+). Residue histidine 47 is part of the active site. Aspartate 48 contacts Ca(2+). Aspartate 89 is an active-site residue.

This sequence belongs to the phospholipase A2 family. Group II subfamily. D49 sub-subfamily. Requires Ca(2+) as cofactor. In terms of tissue distribution, expressed by the venom gland.

The protein localises to the secreted. The enzyme catalyses a 1,2-diacyl-sn-glycero-3-phosphocholine + H2O = a 1-acyl-sn-glycero-3-phosphocholine + a fatty acid + H(+). Functionally, snake venom phospholipase A2 (PLA2) that displays edema-inducing activities. PLA-B is three times more active than PLA-A in edema-inducing activities. PLA2 catalyzes the calcium-dependent hydrolysis of the 2-acyl groups in 3-sn-phosphoglycerides. This is Basic phospholipase A2 PLA-B from Protobothrops flavoviridis (Habu).